A 172-amino-acid chain; its full sequence is Xanthine-guanine phosphoribosyltransferase (172 aa).

Residues 47–48 and 106–114 each bind 5-phospho-alpha-D-ribose 1-diphosphate; these read RG and DDLVDTGKT. A Mg(2+)-binding site is contributed by D107. D110 and I153 together coordinate guanine. The xanthine site is built by D110 and I153. Residues 110–114 and 152–153 contribute to the GMP site; these read DTGKT and WI.

It belongs to the purine/pyrimidine phosphoribosyltransferase family. XGPT subfamily. As to quaternary structure, homotetramer. Requires Mg(2+) as cofactor.

Its subcellular location is the cell inner membrane. It carries out the reaction GMP + diphosphate = guanine + 5-phospho-alpha-D-ribose 1-diphosphate. The enzyme catalyses XMP + diphosphate = xanthine + 5-phospho-alpha-D-ribose 1-diphosphate. The catalysed reaction is IMP + diphosphate = hypoxanthine + 5-phospho-alpha-D-ribose 1-diphosphate. It participates in purine metabolism; GMP biosynthesis via salvage pathway; GMP from guanine: step 1/1. Its pathway is purine metabolism; XMP biosynthesis via salvage pathway; XMP from xanthine: step 1/1. In terms of biological role, purine salvage pathway enzyme that catalyzes the transfer of the ribosyl-5-phosphate group from 5-phospho-alpha-D-ribose 1-diphosphate (PRPP) to the N9 position of the 6-oxopurines guanine and xanthine to form the corresponding ribonucleotides GMP (guanosine 5'-monophosphate) and XMP (xanthosine 5'-monophosphate), with the release of PPi. To a lesser extent, also acts on hypoxanthine. This chain is Xanthine-guanine phosphoribosyltransferase, found in Rhodopseudomonas palustris (strain HaA2).